The chain runs to 355 residues: Peptide chain release factor 1 (355 aa).

N5-methylglutamine is present on Gln-233. Basic and acidic residues predominate over residues 280–293; that stretch reads ERRKKEQERADSRR. The interval 280 to 308 is disordered; that stretch reads ERRKKEQERADSRRGQVGSGDRSERIRTY.

This sequence belongs to the prokaryotic/mitochondrial release factor family. In terms of processing, methylated by PrmC. Methylation increases the termination efficiency of RF1.

It is found in the cytoplasm. In terms of biological role, peptide chain release factor 1 directs the termination of translation in response to the peptide chain termination codons UAG and UAA. The polypeptide is Peptide chain release factor 1 (Rickettsia felis (strain ATCC VR-1525 / URRWXCal2) (Rickettsia azadi)).